The following is a 461-amino-acid chain: Propionyl-CoA carboxylase regulator (461 aa).

An HTH cro/C1-type domain is found at 11–65 (LRELRVKLGLTQKVFAERLGASLPYLNQMENNHRPVSATVVLALAQEFGVDVTKL). The H-T-H motif DNA-binding region spans 22-41 (QKVFAERLGASLPYLNQMEN).

Belongs to the short-chain fatty acyl-CoA assimilation regulator (ScfR) family.

Functionally, transcriptional regulator that controls propionyl-CoA assimilation through the methylmalonyl-CoA pathway via regulation of pccB expression. This is Propionyl-CoA carboxylase regulator from Cereibacter sphaeroides (strain ATCC 17023 / DSM 158 / JCM 6121 / CCUG 31486 / LMG 2827 / NBRC 12203 / NCIMB 8253 / ATH 2.4.1.) (Rhodobacter sphaeroides).